The following is a 195-amino-acid chain: Imidazoleglycerol-phosphate dehydratase (195 aa).

It belongs to the imidazoleglycerol-phosphate dehydratase family.

It is found in the cytoplasm. It catalyses the reaction D-erythro-1-(imidazol-4-yl)glycerol 3-phosphate = 3-(imidazol-4-yl)-2-oxopropyl phosphate + H2O. Its pathway is amino-acid biosynthesis; L-histidine biosynthesis; L-histidine from 5-phospho-alpha-D-ribose 1-diphosphate: step 6/9. This chain is Imidazoleglycerol-phosphate dehydratase, found in Thiobacillus denitrificans (strain ATCC 25259 / T1).